The sequence spans 341 residues: Retinol dehydrogenase 10-A (341 aa).

The chain crosses the membrane as a helical; Signal-anchor span at residues Ile-3–Gly-23. Leu-40–Val-64 serves as a coordination point for NADP(+). Residue Ser-197 coordinates substrate. The active-site Proton acceptor is Tyr-210.

The protein belongs to the short-chain dehydrogenases/reductases (SDR) family.

It localises to the microsome membrane. It is found in the endoplasmic reticulum membrane. The enzyme catalyses all-trans-retinol + NADP(+) = all-trans-retinal + NADPH + H(+). Its pathway is cofactor metabolism; retinol metabolism. Retinol dehydrogenase with a clear preference for NADP. Converts all-trans-retinol to all-trans-retinal. Has no detectable activity towards 11-cis-retinol, 9-cis-retinol and 13-cis-retinol. This chain is Retinol dehydrogenase 10-A (rdh10-a), found in Xenopus laevis (African clawed frog).